Reading from the N-terminus, the 89-residue chain is MAKTSKIIKEQKIEETVARYAELRRELKANKDYRALSQLPRNASPTRMHRRDSLDGRPHAYMRKFGMSRLNFRRLAHEGQIPGVRKASW.

It belongs to the universal ribosomal protein uS14 family. As to quaternary structure, part of the 30S ribosomal subunit. Contacts proteins S3 and S10.

Binds 16S rRNA, required for the assembly of 30S particles and may also be responsible for determining the conformation of the 16S rRNA at the A site. The polypeptide is Small ribosomal subunit protein uS14A (Pediococcus pentosaceus (strain ATCC 25745 / CCUG 21536 / LMG 10740 / 183-1w)).